The chain runs to 38 residues: Large ribosomal subunit protein bL36 (38 aa).

It belongs to the bacterial ribosomal protein bL36 family.

The protein is Large ribosomal subunit protein bL36 of Chloroflexus aurantiacus (strain ATCC 29366 / DSM 635 / J-10-fl).